A 266-amino-acid polypeptide reads, in one-letter code: Imidazole glycerol phosphate synthase subunit HisF (266 aa).

Residues aspartate 11 and aspartate 130 contribute to the active site.

This sequence belongs to the HisA/HisF family. Heterodimer of HisH and HisF.

It is found in the cytoplasm. It catalyses the reaction 5-[(5-phospho-1-deoxy-D-ribulos-1-ylimino)methylamino]-1-(5-phospho-beta-D-ribosyl)imidazole-4-carboxamide + L-glutamine = D-erythro-1-(imidazol-4-yl)glycerol 3-phosphate + 5-amino-1-(5-phospho-beta-D-ribosyl)imidazole-4-carboxamide + L-glutamate + H(+). Its pathway is amino-acid biosynthesis; L-histidine biosynthesis; L-histidine from 5-phospho-alpha-D-ribose 1-diphosphate: step 5/9. IGPS catalyzes the conversion of PRFAR and glutamine to IGP, AICAR and glutamate. The HisF subunit catalyzes the cyclization activity that produces IGP and AICAR from PRFAR using the ammonia provided by the HisH subunit. This is Imidazole glycerol phosphate synthase subunit HisF from Albidiferax ferrireducens (strain ATCC BAA-621 / DSM 15236 / T118) (Rhodoferax ferrireducens).